The chain runs to 370 residues: Glutamate 5-kinase (370 aa).

ATP is bound at residue Lys-12. Substrate-binding residues include Ser-52, Asp-139, and Asn-151. Residues 171–172 (SD) and 213–219 (TGGMFTK) each bind ATP. In terms of domain architecture, PUA spans 278 to 356 (QAHIAVDAGA…SDIESILGYS (79 aa)).

This sequence belongs to the glutamate 5-kinase family.

Its subcellular location is the cytoplasm. The catalysed reaction is L-glutamate + ATP = L-glutamyl 5-phosphate + ADP. The protein operates within amino-acid biosynthesis; L-proline biosynthesis; L-glutamate 5-semialdehyde from L-glutamate: step 1/2. Its function is as follows. Catalyzes the transfer of a phosphate group to glutamate to form L-glutamate 5-phosphate. The protein is Glutamate 5-kinase of Herpetosiphon aurantiacus (strain ATCC 23779 / DSM 785 / 114-95).